A 224-amino-acid polypeptide reads, in one-letter code: Cytidylate kinase (224 aa).

11 to 19 (GPASAGKST) contacts ATP.

This sequence belongs to the cytidylate kinase family. Type 1 subfamily.

Its subcellular location is the cytoplasm. It carries out the reaction CMP + ATP = CDP + ADP. The catalysed reaction is dCMP + ATP = dCDP + ADP. The polypeptide is Cytidylate kinase (Ligilactobacillus salivarius (strain UCC118) (Lactobacillus salivarius)).